A 269-amino-acid chain; its full sequence is Aquaporin-1 (269 aa).

The Cytoplasmic segment spans residues 1–11 (MASEIKKKLFW). A helical membrane pass occupies residues 12–29 (RAVVAEFLAMTLFVFISI). At 30–46 (GSALGFNYPLERNQTLV) the chain is on the extracellular side. N-linked (GlcNAc...) asparagine glycosylation is present at N42. A helical membrane pass occupies residues 47 to 65 (QDNVKVSLAFGLSIATLAQ). Topologically, residues 66-68 (SVG) are cytoplasmic. Residues 69-82 (HISGAHLNPAVTLG) lie within the membrane without spanning it. An NPA 1 motif is present at residues 76–78 (NPA). Over 83–90 (LLLSCQIS) the chain is Cytoplasmic. A helical transmembrane segment spans residues 91–109 (ILRAVMYIIAQCVGAIVAS). Topologically, residues 110–133 (AILSGITSSLLENSLGRNDLARGV) are extracellular. The helical transmembrane segment at 134–153 (NSGQGLGIEIIGTLQLVLCV) threads the bilayer. The Cytoplasmic portion of the chain corresponds to 154–163 (LATTDRRRRD). The chain crosses the membrane as a helical span at residues 164–181 (LGGSAPLAIGLSVALGHL). Topologically, residues 182-186 (LAIDY) are extracellular. The stretch at 187–199 (TGCGINPARSFGS) is an intramembrane region. Residues 192-194 (NPA) carry the NPA 2 motif. At 200–206 (AVLTRNF) the chain is on the extracellular side. N-linked (GlcNAc...) asparagine glycosylation occurs at N205. A helical transmembrane segment spans residues 207 to 224 (SNHWIFWVGPFIGSALAV). At 225–269 (LIYDFILAPRSSDFTDRMKVWTSGQVEEYDLDADDINSRVEMKPK) the chain is on the cytoplasmic side. Phosphoserine is present on S247. Position 253 is a phosphotyrosine (Y253). S262 is subject to Phosphoserine.

This sequence belongs to the MIP/aquaporin (TC 1.A.8) family. As to quaternary structure, homotetramer; each monomer provides an independent water pore. Component of the ankyrin-1 complex in the erythrocyte, composed of ANK1, RHCE, RHAG, SLC4A1, EPB42, GYPA, GYPB and AQP1. Interacts with EPHB2; involved in endolymph production in the inner ear. Identified in a complex with STOM. Interacts (via the N-terminal) with ANK1 (via ANK 1-5 repeats). Interacts (via the C-terminal) with EPB42. As to expression, erythrocytes and renal tubules.

The protein resides in the cell membrane. The enzyme catalyses H2O(in) = H2O(out). The catalysed reaction is nitric oxide(out) = nitric oxide(in). It catalyses the reaction CO2(out) = CO2(in). It carries out the reaction glycerol(in) = glycerol(out). The enzyme catalyses H2O2(out) = H2O2(in). The catalysed reaction is K(+)(in) = K(+)(out). It catalyses the reaction Na(+)(in) = Na(+)(out). In terms of biological role, forms a water channel that facilitates the transport of water across cell membranes, playing a crucial role in water homeostasis in various tissues. Could also be permeable to small solutes including hydrogen peroxide, glycerol and gases such as amonnia (NH3), nitric oxide (NO) and carbon dioxide (CO2). Recruited to the ankyrin-1 complex, a multiprotein complex of the erythrocyte membrane, it could be part of a CO2 metabolon, linking facilitated diffusion of CO2 across the membrane, anion exchange of Cl(-)/HCO3(-) and interconversion of dissolved CO2 and carbonic acid in the cytosol. In vitro, it shows non-selective gated cation channel activity and may be permeable to cations like K(+) and Na(+) in vivo. The protein is Aquaporin-1 of Rattus norvegicus (Rat).